The following is a 411-amino-acid chain: Cytosolic Fe-S cluster assembly factor narfl (411 aa).

Residues Cys11, Cys124, Cys180, Cys329, and Cys333 each coordinate [4Fe-4S] cluster.

The protein belongs to the NARF family. In terms of assembly, component of the CIA complex.

In terms of biological role, component of the cytosolic iron-sulfur protein assembly (CIA) complex, a multiprotein complex that mediates the incorporation of iron-sulfur cluster into extramitochondrial Fe/S proteins. The protein is Cytosolic Fe-S cluster assembly factor narfl (narfl) of Danio rerio (Zebrafish).